Here is an 83-residue protein sequence, read N- to C-terminus: Mu-theraphotoxin-Hhn2n (83 aa).

The signal sequence occupies residues 1-21; the sequence is MKASMYLALAGLVLLFVVGYA. Residues 22-48 constitute a propeptide that is removed on maturation; it reads SESEEKEFPRELLSKIFAVDDFKGEER. 3 disulfide bridges follow: C50–C65, C57–C70, and C64–C77. A Leucine amide modification is found at L81.

Belongs to the neurotoxin 10 (Hwtx-1) family. 15 (Hntx-3) subfamily. In terms of assembly, monomer. As to expression, expressed by the venom gland.

The protein localises to the secreted. In terms of biological role, lethal neurotoxin. Selectively blocks tetrodotoxin-sensitive voltage-gated sodium channels (Nav). Does not affect tetrodotoxin-resistant voltage-gated sodium channels or calcium channels. The polypeptide is Mu-theraphotoxin-Hhn2n (Cyriopagopus hainanus (Chinese bird spider)).